The primary structure comprises 274 residues: Thymidylate synthase (274 aa).

R21 provides a ligand contact to dUMP. Position 51 (H51) interacts with (6R)-5,10-methylene-5,6,7,8-tetrahydrofolate. A dUMP-binding site is contributed by 123-124; the sequence is RR. The Nucleophile role is filled by C156. DUMP-binding positions include 176-179, N187, and 217-219; these read RSAD and HIY. Residue D179 coordinates (6R)-5,10-methylene-5,6,7,8-tetrahydrofolate. S273 provides a ligand contact to (6R)-5,10-methylene-5,6,7,8-tetrahydrofolate.

This sequence belongs to the thymidylate synthase family. Bacterial-type ThyA subfamily. As to quaternary structure, homodimer.

Its subcellular location is the cytoplasm. It carries out the reaction dUMP + (6R)-5,10-methylene-5,6,7,8-tetrahydrofolate = 7,8-dihydrofolate + dTMP. It functions in the pathway pyrimidine metabolism; dTTP biosynthesis. Functionally, catalyzes the reductive methylation of 2'-deoxyuridine-5'-monophosphate (dUMP) to 2'-deoxythymidine-5'-monophosphate (dTMP) while utilizing 5,10-methylenetetrahydrofolate (mTHF) as the methyl donor and reductant in the reaction, yielding dihydrofolate (DHF) as a by-product. This enzymatic reaction provides an intracellular de novo source of dTMP, an essential precursor for DNA biosynthesis. This is Thymidylate synthase from Francisella philomiragia subsp. philomiragia (strain ATCC 25017 / CCUG 19701 / FSC 153 / O#319-036).